Consider the following 213-residue polypeptide: Tellurium resistance protein TerX (213 aa).

This sequence belongs to the CAPAB/TerDEXZ family.

Functionally, not known; seems to contribute to the tellurium resistance (Ter) mechanism. Also involved in phage inhibition (Phi) and colicin resistance (PacB). The protein is Tellurium resistance protein TerX (terX) of Serratia marcescens.